The primary structure comprises 235 residues: MKFTFCLTVLAGTFFSAHSSVQKDDPSPYLVYLKSHFNPCVGVLIKSNWVLAPAHCYLPNLKVMLGNLRIRIRDGTEQTINPIQIIRYWNHSHTAPQDDLMLIRLAKPAILNEKVQPIALATSTVKPGTICMLSGLDWSQNNNGRHPDLRQNLEAPVMSDTACQETEQGKSHRNSICVKFLKVFSRIFGELAVATVICKNKLQGIEVGHFMGGDVGIYTNVQKYVSWIESTTKDK.

The N-terminal stretch at 1-19 (MKFTFCLTVLAGTFFSAHS) is a signal peptide. One can recognise a Peptidase S1 domain in the interval 20–233 (SVQKDDPSPY…YVSWIESTTK (214 aa)). Disulfide bonds link Cys40–Cys56, Cys131–Cys198, and Cys163–Cys177.

It belongs to the peptidase S1 family.

The protein resides in the cytoplasmic vesicle. The protein localises to the secretory vesicle. It localises to the acrosome. Its subcellular location is the secreted. Its function is as follows. Plays a role in male fertility. May have a role in sperm migration or binding to zona-intact eggs. Involved in the activation of the proacrosin/acrosin system. The sequence is that of Probable inactive serine protease 37 from Bos taurus (Bovine).